The chain runs to 95 residues: Small ribosomal subunit protein uS19 (95 aa).

Positions 73–95 are disordered; the sequence is EFSPTRSYRGHGADKNAKGSKKK.

Belongs to the universal ribosomal protein uS19 family.

Functionally, protein S19 forms a complex with S13 that binds strongly to the 16S ribosomal RNA. This is Small ribosomal subunit protein uS19 from Deinococcus deserti (strain DSM 17065 / CIP 109153 / LMG 22923 / VCD115).